Consider the following 349-residue polypeptide: N-acetyltaurine hydrolase (349 aa).

A divalent metal cation contacts are provided by histidine 26, histidine 28, glutamate 169, histidine 201, histidine 230, and aspartate 298.

The protein belongs to the metallo-dependent hydrolases superfamily. Phosphotriesterase family. It depends on a divalent metal cation as a cofactor.

It is found in the cytoplasm. It localises to the cytosol. It catalyses the reaction N-acetyltaurine + H2O = taurine + acetate. The enzyme catalyses N-propanoyltaurine + H2O = propanoate + taurine. The catalysed reaction is N-acetyl-L-methionine + H2O = L-methionine + acetate. It carries out the reaction N-acetyl-L-isoleucine + H2O = L-isoleucine + acetate. It catalyses the reaction N-acetyl-L-leucine + H2O = L-leucine + acetate. The enzyme catalyses N-acetyl-L-valine + H2O = L-valine + acetate. N-acetyltaurine hydrolase that regulates feeding by catalyzing the hydrolysis of N-acetyltaurine into taurine and acetate. N-acetyltaurine has anorexigenic and anti-obesity effects that are dependent on GFRAL receptor and GDF15. PTER also acts on other N-acetyl amino acids (Met, Ile, Leu, Val) and N-propionyltaurine, but at lower rates. The protein is N-acetyltaurine hydrolase of Homo sapiens (Human).